A 413-amino-acid chain; its full sequence is Phosphatidylcholine-sterol acyltransferase (413 aa).

A signal peptide spans Gly1–Gln22. The cysteines at positions 72 and 96 are disulfide-linked. The N-linked (GlcNAc...) asparagine glycan is linked to Asn106. Ser203 functions as the Charge relay system in the catalytic mechanism. Ser203 functions as the Nucleophile in the catalytic mechanism. A glycan (N-linked (GlcNAc...) asparagine) is linked at Asn294. An intrachain disulfide couples Cys335 to Cys378. Residues Asp367 and His399 each act as charge relay system in the active site. Asn406 carries an N-linked (GlcNAc...) asparagine glycan.

This sequence belongs to the AB hydrolase superfamily. Lipase family. Detected in blood plasma (at protein level). Expressed in liver, brain and adrenal glands. Lower expression in testes. In laying hens, expressed higher in brain than in liver. In roosters, higher levels in liver than in brain.

Its subcellular location is the secreted. The catalysed reaction is a sterol + a 1,2-diacyl-sn-glycero-3-phosphocholine = a sterol ester + a 1-acyl-sn-glycero-3-phosphocholine. With respect to regulation, APOA1 is the most potent activator in plasma. Also activated by APOE, APOC1 and APOA4. Functionally, central enzyme in the extracellular metabolism of plasma lipoproteins. Synthesized mainly in the liver and secreted into plasma where it converts cholesterol and phosphatidylcholines (lecithins) to cholesteryl esters and lysophosphatidylcholines on the surface of high and low density lipoproteins (HDLs and LDLs). The cholesterol ester is then transported back to the liver. Also produced in the brain by primary astrocytes, and esterifies free cholesterol on nascent APOE-containing lipoproteins secreted from glia and influences cerebral spinal fluid (CSF) APOE- and APOA1 levels. Together with APOE and the cholesterol transporter ABCA1, plays a key role in the maturation of glial-derived, nascent lipoproteins. Required for remodeling high-density lipoprotein particles into their spherical forms. Has a preference for plasma 16:0-18:2 or 18:O-18:2 phosphatidylcholines. The chain is Phosphatidylcholine-sterol acyltransferase (LCAT) from Gallus gallus (Chicken).